The primary structure comprises 742 residues: Protein CdcH (742 aa).

ATP contacts are provided by residues 230 to 237 (GPPGTGKT) and 503 to 510 (GPPGTGKT). The interval 722–742 (FKGSQGPNVNSRQGSEHIGFQ) is disordered. Positions 723-734 (KGSQGPNVNSRQ) are enriched in polar residues.

Belongs to the AAA ATPase family. CDC48 subfamily.

Functionally, may be part of a transduction pathway connecting light to cell division. In Halobacterium salinarum (strain ATCC 700922 / JCM 11081 / NRC-1) (Halobacterium halobium), this protein is Protein CdcH (cdcH).